A 158-amino-acid chain; its full sequence is MPKESGRKVVATNRKARHDYHVLDTYEAGIALMGTEVKSLREGHASMVDGFCTFYNDELWMEAIHIPEYNQGSWTNHAARRRRKLLLHREELIKISRKVQEAGYTIVPLQLYFVDGRAKVEIGVARGKREYDKRQTLREQQDNREAQREMRERNRRRG.

A compositionally biased stretch (basic and acidic residues) spans 133-152 (KRQTLREQQDNREAQREMRE). The disordered stretch occupies residues 133–158 (KRQTLREQQDNREAQREMRERNRRRG).

Belongs to the SmpB family.

The protein resides in the cytoplasm. In terms of biological role, required for rescue of stalled ribosomes mediated by trans-translation. Binds to transfer-messenger RNA (tmRNA), required for stable association of tmRNA with ribosomes. tmRNA and SmpB together mimic tRNA shape, replacing the anticodon stem-loop with SmpB. tmRNA is encoded by the ssrA gene; the 2 termini fold to resemble tRNA(Ala) and it encodes a 'tag peptide', a short internal open reading frame. During trans-translation Ala-aminoacylated tmRNA acts like a tRNA, entering the A-site of stalled ribosomes, displacing the stalled mRNA. The ribosome then switches to translate the ORF on the tmRNA; the nascent peptide is terminated with the 'tag peptide' encoded by the tmRNA and targeted for degradation. The ribosome is freed to recommence translation, which seems to be the essential function of trans-translation. This Pseudarthrobacter chlorophenolicus (strain ATCC 700700 / DSM 12829 / CIP 107037 / JCM 12360 / KCTC 9906 / NCIMB 13794 / A6) (Arthrobacter chlorophenolicus) protein is SsrA-binding protein.